Consider the following 118-residue polypeptide: V-type proton ATPase subunit G 2 (118 aa).

Positions 25 to 90 are disordered; sequence ARKRKARRLK…VQGMQSSQQR (66 aa). Positions 35–56 are enriched in basic and acidic residues; it reads QAKEEAQMEVEQYRREREHEFQ. Polar residues-rich tracts occupy residues 57 to 69 and 78 to 89; these read SKQQAAMGSQGNL and RRQVQGMQSSQQ.

It belongs to the V-ATPase G subunit family. As to quaternary structure, V-ATPase is a heteromultimeric enzyme made up of two complexes: the ATP-hydrolytic V1 complex and the proton translocation V0 complex. The V1 complex consists of three catalytic AB heterodimers that form a heterohexamer, three peripheral stalks each consisting of EG heterodimers, one central rotor including subunits D and F, and the regulatory subunits C and H. The proton translocation complex V0 consists of the proton transport subunit a, a ring of proteolipid subunits c9c'', rotary subunit d, subunits e and f, and the accessory subunits ATP6AP1/Ac45 and ATP6AP2/PRR. As to expression, brain.

It localises to the melanosome. Its subcellular location is the cytoplasmic vesicle. The protein localises to the clathrin-coated vesicle membrane. Functionally, subunit of the V1 complex of vacuolar(H+)-ATPase (V-ATPase), a multisubunit enzyme composed of a peripheral complex (V1) that hydrolyzes ATP and a membrane integral complex (V0) that translocates protons. V-ATPase is responsible for acidifying and maintaining the pH of intracellular compartments and in some cell types, is targeted to the plasma membrane, where it is responsible for acidifying the extracellular environment. The protein is V-type proton ATPase subunit G 2 (ATP6V1G2) of Homo sapiens (Human).